The primary structure comprises 86 residues: Small ribosomal subunit protein bS18 (86 aa).

This sequence belongs to the bacterial ribosomal protein bS18 family. Part of the 30S ribosomal subunit. Forms a tight heterodimer with protein bS6.

Binds as a heterodimer with protein bS6 to the central domain of the 16S rRNA, where it helps stabilize the platform of the 30S subunit. In Maridesulfovibrio salexigens (strain ATCC 14822 / DSM 2638 / NCIMB 8403 / VKM B-1763) (Desulfovibrio salexigens), this protein is Small ribosomal subunit protein bS18.